The sequence spans 388 residues: MDKLDANVSSEEGFGSVEKVVLLTFLSTVILMAILGNLLVMVAVCWDRQLRKIKTNYFIVSLAFADLLVSVLVMPFGAIELVQDIWIYGEVFCLVRTSLDVLLTTASIFHLCCISLDRYYAICCQPLVYRNKMTPLRIALMLGGCWVIPTFISFLPIMQGWNNIGIIDLIEKRKFNQNSNSTYCVFMVNKPYAITCSVVAFYIPFLLMVLAYYRIYVTAKEHAHQIQMLQRAGASSESRPQSADQHSTHRMRTETKAAKTLCIIMGCFCLCWAPFFVTNIVDPFIDYTVPGQVWTAFLWLGYINSGLNPFLYAFLNKSFRRAFLIILCCDDERYRRPSILGQTVPCSTTTINGSTHVLRDAVECGGQWESQCHPPATSPLVAAQPSDT.

Residues 1-19 are Extracellular-facing; that stretch reads MDKLDANVSSEEGFGSVEK. An N-linked (GlcNAc...) asparagine glycan is attached at asparagine 7. The helical transmembrane segment at 20–44 threads the bilayer; that stretch reads VVLLTFLSTVILMAILGNLLVMVAV. Residues 45 to 54 lie on the Cytoplasmic side of the membrane; the sequence is CWDRQLRKIK. A helical membrane pass occupies residues 55-78; the sequence is TNYFIVSLAFADLLVSVLVMPFGA. The Extracellular portion of the chain corresponds to 79-92; it reads IELVQDIWIYGEVF. The chain crosses the membrane as a helical span at residues 93-117; sequence CLVRTSLDVLLTTASIFHLCCISLD. Residues cysteine 93 and cysteine 184 are joined by a disulfide bond. Aspartate 100 is a binding site for serotonin. Residues 118–133 are Cytoplasmic-facing; it reads RYYAICCQPLVYRNKM. Residues 134–157 traverse the membrane as a helical segment; the sequence is TPLRIALMLGGCWVIPTFISFLPI. Residues 158 to 188 lie on the Extracellular side of the membrane; that stretch reads MQGWNNIGIIDLIEKRKFNQNSNSTYCVFMV. The helical transmembrane segment at 189 to 212 threads the bilayer; that stretch reads NKPYAITCSVVAFYIPFLLMVLAY. At 213–257 the chain is on the cytoplasmic side; sequence YRIYVTAKEHAHQIQMLQRAGASSESRPQSADQHSTHRMRTETKA. A helical transmembrane segment spans residues 258-283; it reads AKTLCIIMGCFCLCWAPFFVTNIVDP. Serotonin is bound at residue asparagine 279. Residues 284-290 lie on the Extracellular side of the membrane; sequence FIDYTVP. Residues 291–314 traverse the membrane as a helical segment; the sequence is GQVWTAFLWLGYINSGLNPFLYAF. Topologically, residues 315 to 388 are cytoplasmic; it reads LNKSFRRAFL…PLVAAQPSDT (74 aa).

This sequence belongs to the G-protein coupled receptor 1 family. As to quaternary structure, interacts (via C-terminus 330-346 AA) with GRK5; this interaction is promoted by 5-HT (serotonin). Interacts with MAGI2, MPP3, NHERF1 and SNX27 isoforms 1 and 2. Forms a complex including NHERF1 and EZR. In terms of assembly, interacts with PATJ, NOS1 and SEC23A. As to expression, expressed in ileum, brain, and atrium, but not in the ventricle. Mainly expressed in atria and cardiac ventricle. In terms of tissue distribution, expressed in all cardiovascular tissues analyzed.

It localises to the cell membrane. It is found in the endosome membrane. Its function is as follows. G-protein coupled receptor for 5-hydroxytryptamine (serotonin), a biogenic hormone that functions as a neurotransmitter, a hormone and a mitogen. Ligand binding causes a conformation change that triggers signaling via guanine nucleotide-binding proteins (G proteins) and modulates the activity of downstream effectors. HTR4 is coupled to G(s) G alpha proteins and mediates activation of adenylate cyclase activity. The sequence is that of 5-hydroxytryptamine receptor 4 from Homo sapiens (Human).